The primary structure comprises 429 residues: Adenylosuccinate synthetase (429 aa).

GTP-binding positions include 12 to 18 (GDEGKGK) and 40 to 42 (GHT). The Proton acceptor role is filled by Asp13. Mg(2+)-binding residues include Asp13 and Gly40. Residues 13 to 16 (DEGK), 38 to 41 (NAGH), Thr128, Arg142, Gln223, Thr238, and Arg302 each bind IMP. Residue His41 is the Proton donor of the active site. Residue 298-304 (TTTGRPR) participates in substrate binding. GTP contacts are provided by residues Arg304, 330–332 (SID), and 412–414 (SVG).

The protein belongs to the adenylosuccinate synthetase family. In terms of assembly, homodimer. Mg(2+) serves as cofactor.

Its subcellular location is the cytoplasm. The enzyme catalyses IMP + L-aspartate + GTP = N(6)-(1,2-dicarboxyethyl)-AMP + GDP + phosphate + 2 H(+). The protein operates within purine metabolism; AMP biosynthesis via de novo pathway; AMP from IMP: step 1/2. Its function is as follows. Plays an important role in the de novo pathway of purine nucleotide biosynthesis. Catalyzes the first committed step in the biosynthesis of AMP from IMP. The sequence is that of Adenylosuccinate synthetase from Bacillus cereus (strain ATCC 10987 / NRS 248).